Consider the following 213-residue polypeptide: Cell division protein SepF 2 (213 aa).

The tract at residues 16 to 89 (EDDGYDGRGF…ASLAAESSRP (74 aa)) is disordered. A compositionally biased stretch (acidic residues) spans 27-39 (PDDDFEPELDPEP).

This sequence belongs to the SepF family. Homodimer. Interacts with FtsZ.

It localises to the cytoplasm. In terms of biological role, cell division protein that is part of the divisome complex and is recruited early to the Z-ring. Probably stimulates Z-ring formation, perhaps through the cross-linking of FtsZ protofilaments. Its function overlaps with FtsA. This chain is Cell division protein SepF 2, found in Streptomyces coelicolor (strain ATCC BAA-471 / A3(2) / M145).